We begin with the raw amino-acid sequence, 202 residues long: Indolepyruvate oxidoreductase subunit IorB (202 aa).

Heterodimer of the IorA and IorB subunits.

It carries out the reaction indole-3-pyruvate + 2 oxidized [2Fe-2S]-[ferredoxin] + CoA = (indol-3-yl)acetyl-CoA + 2 reduced [2Fe-2S]-[ferredoxin] + CO2 + H(+). In terms of biological role, catalyzes the ferredoxin-dependent oxidative decarboxylation of arylpyruvates. The chain is Indolepyruvate oxidoreductase subunit IorB (iorB) from Pyrococcus horikoshii (strain ATCC 700860 / DSM 12428 / JCM 9974 / NBRC 100139 / OT-3).